The chain runs to 129 residues: Fluoride-specific ion channel FluC 1 (129 aa).

Transmembrane regions (helical) follow at residues Ala43–Val63, Val68–Tyr88, and Leu100–Gly120. Na(+) is bound by residues Gly78 and Ser81.

This sequence belongs to the fluoride channel Fluc/FEX (TC 1.A.43) family.

The protein localises to the cell membrane. The catalysed reaction is fluoride(in) = fluoride(out). Its activity is regulated as follows. Na(+) is not transported, but it plays an essential structural role and its presence is essential for fluoride channel function. In terms of biological role, fluoride-specific ion channel. Important for reducing fluoride concentration in the cell, thus reducing its toxicity. This is Fluoride-specific ion channel FluC 1 from Frankia casuarinae (strain DSM 45818 / CECT 9043 / HFP020203 / CcI3).